We begin with the raw amino-acid sequence, 359 residues long: Non-classical arabinogalactan protein 31 (359 aa).

The N-terminal stretch at 1 to 24 is a signal peptide; it reads MGFIGKSVLVSLVALWCFTSSVFT. The interval 31 to 215 is disordered; it reads TQTPSLAPAP…PPVSPPTKPP (185 aa). Over residues 44–66 the composition is skewed to basic residues; sequence HHGHHHPHPPHHHHPHPHPHPHP. Residues 67-215 show a composition bias toward pro residues; that stretch reads PAKSPVKPPV…PPVSPPTKPP (149 aa). 4-hydroxyproline occurs at positions 71, 75, 79, 82, 83, 87, 91, 95, 99, 103, 107, 111, 114, 115, 119, 123, 127, 131, 135, 139, 143, 147, 151, 155, 159, 163, 167, 171, 175, 179, 183, 186, 187, 191, 195, 199, 203, 207, 210, 211, 215, and 219. Pro-71, Pro-75, Pro-79, Pro-82, Pro-83, Pro-87, Pro-91, Pro-95, Pro-99, Pro-103, Pro-107, Pro-111, Pro-114, Pro-115, Pro-119, Pro-123, Pro-127, Pro-131, Pro-135, Pro-139, Pro-143, Pro-147, Pro-151, Pro-155, Pro-159, Pro-163, Pro-167, Pro-171, Pro-175, Pro-179, Pro-183, Pro-186, Pro-187, Pro-191, Pro-195, Pro-199, Pro-203, Pro-207, Pro-210, Pro-211, Pro-215, and Pro-219 each carry an O-linked (Ara...) hydroxyproline glycan. The stretch at 90–109 is repeat 1; the sequence is PPVYPPTKAPVKPPTKPPVK. A run of 3 repeats spans residues 122-141, 142-161, and 162-181. N-linked (GlcNAc...) asparagine glycosylation is found at Asn-226 and Asn-269.

It belongs to the non-classical AGP family. Post-translationally, hydroxylated on numerous prolines in the proline-rich region. In terms of processing, O-glycosylated on numerous hydroxyprolines in the proline-rich region; noncontiguous hydroxylproline residues are glycosylated with arabinogalactan. In terms of tissue distribution, expressed in vascular bundles of roots, leaves, sepals and stamen filaments, and pistils but not stigma.

It is found in the secreted. It localises to the cell wall. Proteoglycan that may contribute to the strengthening of cell walls. The chain is Non-classical arabinogalactan protein 31 from Arabidopsis thaliana (Mouse-ear cress).